Consider the following 89-residue polypeptide: UPF0237 protein CA_C0478 (89 aa).

One can recognise an ACT domain in the interval 4–78 (IITVIGKDKV…KKLGVSIKIQ (75 aa)).

It belongs to the UPF0237 family.

The polypeptide is UPF0237 protein CA_C0478 (Clostridium acetobutylicum (strain ATCC 824 / DSM 792 / JCM 1419 / IAM 19013 / LMG 5710 / NBRC 13948 / NRRL B-527 / VKM B-1787 / 2291 / W)).